Here is a 228-residue protein sequence, read N- to C-terminus: Phosphatidylserine decarboxylase proenzyme (228 aa).

Ser197 (schiff-base intermediate with substrate; via pyruvic acid) is an active-site residue. Ser197 carries the post-translational modification Pyruvic acid (Ser); by autocatalysis.

It belongs to the phosphatidylserine decarboxylase family. PSD-A subfamily. Heterodimer of a large membrane-associated beta subunit and a small pyruvoyl-containing alpha subunit. Requires pyruvate as cofactor. Is synthesized initially as an inactive proenzyme. Formation of the active enzyme involves a self-maturation process in which the active site pyruvoyl group is generated from an internal serine residue via an autocatalytic post-translational modification. Two non-identical subunits are generated from the proenzyme in this reaction, and the pyruvate is formed at the N-terminus of the alpha chain, which is derived from the carboxyl end of the proenzyme. The post-translation cleavage follows an unusual pathway, termed non-hydrolytic serinolysis, in which the side chain hydroxyl group of the serine supplies its oxygen atom to form the C-terminus of the beta chain, while the remainder of the serine residue undergoes an oxidative deamination to produce ammonia and the pyruvoyl prosthetic group on the alpha chain.

It localises to the cell membrane. The catalysed reaction is a 1,2-diacyl-sn-glycero-3-phospho-L-serine + H(+) = a 1,2-diacyl-sn-glycero-3-phosphoethanolamine + CO2. Its pathway is phospholipid metabolism; phosphatidylethanolamine biosynthesis; phosphatidylethanolamine from CDP-diacylglycerol: step 2/2. Catalyzes the formation of phosphatidylethanolamine (PtdEtn) from phosphatidylserine (PtdSer). This chain is Phosphatidylserine decarboxylase proenzyme, found in Phocaeicola vulgatus (strain ATCC 8482 / DSM 1447 / JCM 5826 / CCUG 4940 / NBRC 14291 / NCTC 11154) (Bacteroides vulgatus).